The sequence spans 253 residues: Pimeloyl-[acyl-carrier protein] methyl ester esterase (253 aa).

Substrate is bound by residues tryptophan 18, 78–79, and 139–143; these read SL and FLALD. Serine 78 (nucleophile) is an active-site residue. Catalysis depends on residues aspartate 203 and histidine 231. Histidine 231 is a binding site for substrate.

This sequence belongs to the AB hydrolase superfamily. Carboxylesterase BioH family. As to quaternary structure, monomer.

It is found in the cytoplasm. The enzyme catalyses 6-carboxyhexanoyl-[ACP] methyl ester + H2O = 6-carboxyhexanoyl-[ACP] + methanol + H(+). Its pathway is cofactor biosynthesis; biotin biosynthesis. In terms of biological role, the physiological role of BioH is to remove the methyl group introduced by BioC when the pimeloyl moiety is complete. It allows to synthesize pimeloyl-ACP via the fatty acid synthetic pathway through the hydrolysis of the ester bonds of pimeloyl-ACP esters. This chain is Pimeloyl-[acyl-carrier protein] methyl ester esterase, found in Xanthomonas oryzae pv. oryzae (strain MAFF 311018).